A 170-amino-acid chain; its full sequence is Chorion protein S18 (170 aa).

A signal peptide spans Met-1–Ala-17. Positions Ala-146–Gly-159 are enriched in low complexity. Positions Ala-146–Tyr-170 are disordered. Positions Tyr-160–Tyr-170 are enriched in polar residues.

It belongs to the chorion protein S15/S18 family.

It localises to the secreted. Chorion membrane (egg shell) protein; plays a role in protecting the egg from the environment. This Drosophila virilis (Fruit fly) protein is Chorion protein S18 (Cp18).